A 237-amino-acid polypeptide reads, in one-letter code: Phosphoribosylaminoimidazole-succinocarboxamide synthase (237 aa).

It belongs to the SAICAR synthetase family.

It catalyses the reaction 5-amino-1-(5-phospho-D-ribosyl)imidazole-4-carboxylate + L-aspartate + ATP = (2S)-2-[5-amino-1-(5-phospho-beta-D-ribosyl)imidazole-4-carboxamido]succinate + ADP + phosphate + 2 H(+). It participates in purine metabolism; IMP biosynthesis via de novo pathway; 5-amino-1-(5-phospho-D-ribosyl)imidazole-4-carboxamide from 5-amino-1-(5-phospho-D-ribosyl)imidazole-4-carboxylate: step 1/2. In Deinococcus deserti (strain DSM 17065 / CIP 109153 / LMG 22923 / VCD115), this protein is Phosphoribosylaminoimidazole-succinocarboxamide synthase.